Consider the following 527-residue polypeptide: ATP-dependent RNA helicase DBP3 (527 aa).

Residues 1-11 (MSKDHKDKKRK) show a composition bias toward basic residues. The tract at residues 1-89 (MSKDHKDKKR…TGYSQSPALT (89 aa)) is disordered. The span at 12 to 24 (HSDEATEEVEKKT) shows a compositional bias: basic and acidic residues. A compositionally biased stretch (basic residues) spans 25 to 44 (KVSKKEKKDKKEKKEKKDKK). Over residues 45-71 (EKKDKSEKKDKSEKKEKKEKKESEDVP) the composition is skewed to basic and acidic residues. Polar residues predominate over residues 72 to 89 (TKSSAVVSTGYSQSPALT). A Q motif motif is present at residues 119–145 (LGFDQIDLDSRIASVISKFPTPTPIQA). The 172-residue stretch at 148–319 (WPYLLSGKDV…STFMNSPVKV (172 aa)) folds into the Helicase ATP-binding domain. ATP is bound at residue 161–168 (AETGSGKT). The DEAD box signature appears at 266-269 (DEAD). In terms of domain architecture, Helicase C-terminal spans 348 to 497 (KLLSLLRKYQ…PVPDELLKFG (150 aa)).

The protein belongs to the DEAD box helicase family. DDX5/DBP2 subfamily.

It is found in the nucleus. The protein localises to the nucleolus. The enzyme catalyses ATP + H2O = ADP + phosphate + H(+). Functionally, ATP-dependent RNA helicase required for 60S ribosomal subunit synthesis. Involved in efficient pre-rRNA processing, predominantly at site A3, which is necessary for the normal formation of 25S and 5.8S rRNAs. The protein is ATP-dependent RNA helicase DBP3 (DBP3) of Debaryomyces hansenii (strain ATCC 36239 / CBS 767 / BCRC 21394 / JCM 1990 / NBRC 0083 / IGC 2968) (Yeast).